The chain runs to 49 residues: Omega-segestritoxin-Sf1a (49 aa).

Disulfide bonds link cysteine 3-cysteine 22, cysteine 10-cysteine 27, cysteine 21-cysteine 48, and cysteine 29-cysteine 46.

In terms of tissue distribution, expressed by the venom gland.

It is found in the secreted. Potent and selective blocker of N-type voltage-gated calcium channels (Cav2.2/CACNA1B). Also blocks vertebrate Cav2.1/CACNA1A (P/Q-type) and Cav1.2/CACNA1C (L-type) channels at very high concentration (2 micromolar). The protein is Omega-segestritoxin-Sf1a of Segestria florentina (Tube-web spider).